A 121-amino-acid chain; its full sequence is Phosphoribosyl-ATP pyrophosphatase (121 aa).

Belongs to the PRA-PH family.

The protein localises to the cytoplasm. It catalyses the reaction 1-(5-phospho-beta-D-ribosyl)-ATP + H2O = 1-(5-phospho-beta-D-ribosyl)-5'-AMP + diphosphate + H(+). It functions in the pathway amino-acid biosynthesis; L-histidine biosynthesis; L-histidine from 5-phospho-alpha-D-ribose 1-diphosphate: step 2/9. The sequence is that of Phosphoribosyl-ATP pyrophosphatase from Burkholderia cenocepacia (strain ATCC BAA-245 / DSM 16553 / LMG 16656 / NCTC 13227 / J2315 / CF5610) (Burkholderia cepacia (strain J2315)).